Here is a 227-residue protein sequence, read N- to C-terminus: Probable minor pilin MMP0600 (227 aa).

A propeptide spanning residues 1–7 is cleaved from the precursor; sequence MAKFSKG. Positions 8-16 match the QXSXEXXXL motif; sequence QISIELILL.

In terms of processing, the N-terminus is probably cleaved by the prepilin peptidase EppA, which recognizes the class III signal sequence.

The protein resides in the secreted. It localises to the cell surface. It is found in the fimbrium. This is Probable minor pilin MMP0600 from Methanococcus maripaludis (strain DSM 14266 / JCM 13030 / NBRC 101832 / S2 / LL).